We begin with the raw amino-acid sequence, 292 residues long: Hypersensitive-induced response protein 4 (292 aa).

Gly-2 carries N-myristoyl glycine lipidation.

Self-interacts and forms heteromers. Interacts with NB-LRR class of R proteins before R proteins (e.g. RPS2 or RPM1) are activated by the effectors.

It is found in the cell membrane. The sequence is that of Hypersensitive-induced response protein 4 (HIR4) from Arabidopsis thaliana (Mouse-ear cress).